A 75-amino-acid chain; its full sequence is Protein Tlp homolog (75 aa).

The segment at 48 to 75 (KNQRRREALDGMREEIKDEARDKKNGYM) is disordered.

The protein belongs to the Tlp family.

This Clostridium botulinum (strain 657 / Type Ba4) protein is Protein Tlp homolog.